Here is a 46-residue protein sequence, read N- to C-terminus: Putative antitoxin VapB3 (46 aa).

The protein belongs to the UPF0165 family.

Functionally, possibly the antitoxin component of a type II toxin-antitoxin (TA) system. Its cognate toxin is VapC3 (Potential). This is Putative antitoxin VapB3 (vapB3) from Pyrococcus furiosus (strain ATCC 43587 / DSM 3638 / JCM 8422 / Vc1).